The chain runs to 41 residues: Competence-stimulating peptide type 2 (41 aa).

A propeptide spanning residues 1–24 (MKNTVKLEQFVALKEKDLQKIKGG) is cleaved from the precursor.

Belongs to the ComC family.

The protein resides in the secreted. Acts as a pheromone, induces cells to develop competence for genetic transformation. This Streptococcus pneumoniae serotype 4 (strain ATCC BAA-334 / TIGR4) protein is Competence-stimulating peptide type 2 (comC2).